A 132-amino-acid polypeptide reads, in one-letter code: Monothiol glutaredoxin-S9 (132 aa).

The segment at 16-38 is disordered; it reads ASRPATAAAAPPPPPPRGEEEEV. Residues 35–131 enclose the Glutaredoxin domain; it reads EEEVRRAVAE…PILKEAGALW (97 aa). A [2Fe-2S] cluster-binding site is contributed by Cys-55. The short motif at 129–132 is the Responsive for interaction with TGA factors element; sequence ALWL.

This sequence belongs to the glutaredoxin family. CC-type subfamily.

Its subcellular location is the cytoplasm. It localises to the nucleus. In terms of biological role, may only reduce GSH-thiol disulfides, but not protein disulfides. The protein is Monothiol glutaredoxin-S9 (GRXS9) of Oryza sativa subsp. japonica (Rice).